We begin with the raw amino-acid sequence, 858 residues long: Elongation factor 2 (858 aa).

One can recognise a tr-type G domain in the interval 17 to 362 (ANIRNMSVIA…MITIHLPSPV (346 aa)). 26-33 (AHVDHGKS) contributes to the GTP binding site. Phosphothreonine is present on T54. Position 57 is a phosphothreonine; by EEF2K (T57). T59 carries the phosphothreonine modification. N6-succinyllysine is present on K152. Residues 158-161 (NKMD) and 216-218 (SGL) contribute to the GTP site. K235 carries the N6-acetyllysine modification. Position 239 is an N6-acetyllysine; alternate (K239). K239 is covalently cross-linked (Glycyl lysine isopeptide (Lys-Gly) (interchain with G-Cter in SUMO1); alternate). Phosphotyrosine; by CSK is present on Y265. Position 272 is an N6-acetyllysine; alternate (K272). K272 is modified (N6-succinyllysine; alternate). K275 is subject to N6-acetyllysine. K322 is covalently cross-linked (Glycyl lysine isopeptide (Lys-Gly) (interchain with G-Cter in SUMO)). A Phosphoserine modification is found at S325. Y373 is subject to Phosphotyrosine; by CSK. Phosphothreonine is present on T435. Residues K439 and K445 each carry the N6-acetyllysine modification. Position 502 is a phosphoserine (S502). K525 is subject to N6,N6,N6-trimethyllysine; by EEF2KMT. A Glycyl lysine isopeptide (Lys-Gly) (interchain with G-Cter in SUMO) cross-link involves residue K529. At K572 the chain carries N6-succinyllysine. S595 carries the post-translational modification Phosphoserine; by CDK2. An N6-acetyllysine modification is found at K619. H715 is subject to Diphthamide.

The protein belongs to the TRAFAC class translation factor GTPase superfamily. Classic translation factor GTPase family. EF-G/EF-2 subfamily. In terms of assembly, binds to 80S ribosomes. Actively translating ribosomes show mutually exclusive binding of eIF5a (EIF5A or EIF5A2) and EEF2/eEF2. Interacts with SERBP1; interaction sequesters EEF2/eEF2 at the A-site of the ribosome, thereby blocking the interaction sites of the mRNA-tRNA complex, promoting ribosome stabilization and hibernation. Interacts with HABP4; interaction takes place at the A-site of hibernating ribosomes and promotes ribosome stabilization. Component of the mRNA surveillance SURF complex, at least composed of ERF1, ERF3 (ERF3A or ERF3B), EEF2, UPF1/RENT1, SMG1, SMG8 and SMG9. Interacts with RBPMS2. Phosphorylation by EF-2 kinase completely inactivates EF-2; it requires prior phosphorylation by CDK2 at Ser-595 during mitotic prometaphase. Phosphorylation by CSK promotes SUMOylation, proteolytic cleavage, and nuclear translocation if the C-terminal fragment. Post-translationally, diphthamide is 2-[3-carboxyamido-3-(trimethyl-ammonio)propyl]histidine. In terms of processing, ISGylated. Proteolytically processed at two sites following phosphorylation by CSK. Post-translationally, SUMOylated following phosphorylation by CSK, promotes proteolytic cleavage.

Its subcellular location is the cytoplasm. It localises to the nucleus. It catalyses the reaction GTP + H2O = GDP + phosphate + H(+). Functionally, catalyzes the GTP-dependent ribosomal translocation step during translation elongation. During this step, the ribosome changes from the pre-translocational (PRE) to the post-translocational (POST) state as the newly formed A-site-bound peptidyl-tRNA and P-site-bound deacylated tRNA move to the P and E sites, respectively. Catalyzes the coordinated movement of the two tRNA molecules, the mRNA and conformational changes in the ribosome. This Callithrix jacchus (White-tufted-ear marmoset) protein is Elongation factor 2 (EEF2).